Here is a 393-residue protein sequence, read N- to C-terminus: 1-deoxy-D-xylulose 5-phosphate reductoisomerase (393 aa).

Residues Thr10, Gly11, Ser12, Ile13, Gln38, and Asn124 each contribute to the NADPH site. Lys125 contacts 1-deoxy-D-xylulose 5-phosphate. Glu126 provides a ligand contact to NADPH. Asp150 contacts Mn(2+). Residues Ser151, Glu152, Ser179, and His202 each coordinate 1-deoxy-D-xylulose 5-phosphate. Position 152 (Glu152) interacts with Mn(2+). Residue Gly208 participates in NADPH binding. Residues Ser215, Asn220, Lys221, and Glu224 each contribute to the 1-deoxy-D-xylulose 5-phosphate site. Residue Glu224 participates in Mn(2+) binding.

It belongs to the DXR family. Mg(2+) serves as cofactor. Mn(2+) is required as a cofactor.

The catalysed reaction is 2-C-methyl-D-erythritol 4-phosphate + NADP(+) = 1-deoxy-D-xylulose 5-phosphate + NADPH + H(+). Its pathway is isoprenoid biosynthesis; isopentenyl diphosphate biosynthesis via DXP pathway; isopentenyl diphosphate from 1-deoxy-D-xylulose 5-phosphate: step 1/6. Catalyzes the NADPH-dependent rearrangement and reduction of 1-deoxy-D-xylulose-5-phosphate (DXP) to 2-C-methyl-D-erythritol 4-phosphate (MEP). This chain is 1-deoxy-D-xylulose 5-phosphate reductoisomerase, found in Ralstonia nicotianae (strain ATCC BAA-1114 / GMI1000) (Ralstonia solanacearum).